Reading from the N-terminus, the 167-residue chain is MIIFKDVFPGVELFSDSFPVSLVNETVYKVKGKLRTDTFAIDDKAIGGNASAEGGEEGTDAASKQGVDIVMNSRLVEYALSKKDYMTHIKSYMKSVKDKLQETKPADSELFQKNVQPFIKEVLNDFKEYQLFCGESMGPEGMLALMKWDGETPYMFFFKHGLDEEKV.

Residues 1 to 167 (MIIFKDVFPG…FKHGLDEEKV (167 aa)) enclose the TCTP domain.

Belongs to the TCTP family.

It localises to the cytoplasm. Its function is as follows. Involved in calcium binding and microtubule stabilization. The polypeptide is Translationally-controlled tumor protein homolog (TCTP) (Lumbricus rubellus (Humus earthworm)).